Here is a 159-residue protein sequence, read N- to C-terminus: SsrA-binding protein (159 aa).

The protein belongs to the SmpB family.

It localises to the cytoplasm. In terms of biological role, required for rescue of stalled ribosomes mediated by trans-translation. Binds to transfer-messenger RNA (tmRNA), required for stable association of tmRNA with ribosomes. tmRNA and SmpB together mimic tRNA shape, replacing the anticodon stem-loop with SmpB. tmRNA is encoded by the ssrA gene; the 2 termini fold to resemble tRNA(Ala) and it encodes a 'tag peptide', a short internal open reading frame. During trans-translation Ala-aminoacylated tmRNA acts like a tRNA, entering the A-site of stalled ribosomes, displacing the stalled mRNA. The ribosome then switches to translate the ORF on the tmRNA; the nascent peptide is terminated with the 'tag peptide' encoded by the tmRNA and targeted for degradation. The ribosome is freed to recommence translation, which seems to be the essential function of trans-translation. This Coxiella burnetii (strain CbuG_Q212) (Coxiella burnetii (strain Q212)) protein is SsrA-binding protein.